The following is a 114-amino-acid chain: Replication initiation control protein YabA (114 aa).

Residues His-79, Cys-81, Cys-95, and Cys-98 each contribute to the Zn(2+) site.

The protein belongs to the YabA family. As to quaternary structure, homotetramer. Interacts with both DnaA and DnaN, acting as a bridge between these two proteins. Requires Zn(2+) as cofactor.

The protein localises to the cytoplasm. Its subcellular location is the nucleoid. In terms of biological role, involved in control of chromosome replication initiation. Inhibits the cooperative binding of DnaA to the oriC region, thus negatively regulating initiation of chromosome replication. Inhibits the ability of DnaA-ATP to form a helix on DNA; does not disassemble preformed DnaA-DNA helices. Decreases the residence time of DnaA on the chromosome at its binding sites (oriC, replication forks and promoter-binding sites). Tethers DnaA to the replication machinery via the DNA polymerase beta sliding clamp subunit (dnaN). Associates with oriC and other DnaA targets on the chromosome in a DnaA-dependent manner. In Lactobacillus gasseri (strain ATCC 33323 / DSM 20243 / BCRC 14619 / CIP 102991 / JCM 1131 / KCTC 3163 / NCIMB 11718 / NCTC 13722 / AM63), this protein is Replication initiation control protein YabA.